A 282-amino-acid polypeptide reads, in one-letter code: Pantothenate synthetase (282 aa).

30-37 (MGNLHEGH) provides a ligand contact to ATP. Residue H37 is the Proton donor of the active site. Q61 lines the (R)-pantoate pocket. Beta-alanine is bound at residue Q61. 148-151 (GQKD) is an ATP binding site. Position 154 (Q154) interacts with (R)-pantoate. Residues V177 and 185 to 188 (LSSR) each bind ATP.

This sequence belongs to the pantothenate synthetase family. Homodimer.

It is found in the cytoplasm. It carries out the reaction (R)-pantoate + beta-alanine + ATP = (R)-pantothenate + AMP + diphosphate + H(+). Its pathway is cofactor biosynthesis; (R)-pantothenate biosynthesis; (R)-pantothenate from (R)-pantoate and beta-alanine: step 1/1. Catalyzes the condensation of pantoate with beta-alanine in an ATP-dependent reaction via a pantoyl-adenylate intermediate. This chain is Pantothenate synthetase, found in Acinetobacter baumannii (strain AB0057).